The chain runs to 446 residues: Putative hydrolase YbfO (446 aa).

Positions 1–28 (MKRMIVRMTLPLLIVCLAFSSFSASARA) are cleaved as a signal peptide.

This Bacillus subtilis (strain 168) protein is Putative hydrolase YbfO (ybfO).